Consider the following 76-residue polypeptide: Conotoxin VnMSGL-0112 (76 aa).

An N-terminal signal peptide occupies residues 1–20 (MSGLGIMVLTLLLLVSMATS). Residues 21-45 (HQDGRGKQATQRDAINVRRRRSITR) constitute a propeptide that is removed on maturation. Intrachain disulfides connect Cys-49-Cys-61, Cys-53-Cys-70, and Cys-60-Cys-74.

This sequence belongs to the conotoxin O3 superfamily. Expressed by the venom duct.

It localises to the secreted. The polypeptide is Conotoxin VnMSGL-0112 (Conus ventricosus (Mediterranean cone)).